Here is a 469-residue protein sequence, read N- to C-terminus: Cyclin-dependent kinase 14 (469 aa).

Residues Ser-24, Ser-78, and Ser-95 each carry the phosphoserine modification. Positions 103–133 (FKSSSAGKESPKVRRHSSPSSPTSPKFGKAD) are disordered. Residue Ser-134 is modified to Phosphoserine. The 285-residue stretch at 135–419 (YEKLEKLGEG…AQAALSHEYF (285 aa)) folds into the Protein kinase domain. ATP contacts are provided by residues 141–149 (LGEGSYATV) and Lys-164. Asp-256 (proton acceptor) is an active-site residue. The tract at residues 449–469 (ESMRAFGKNNSYGKSLSNSKH) is disordered. Positions 456–469 (KNNSYGKSLSNSKH) are enriched in polar residues.

The protein belongs to the protein kinase superfamily. CMGC Ser/Thr protein kinase family. CDC2/CDKX subfamily. As to quaternary structure, found in a complex with LRP6, CCNY and CAPRIN2 during G2/M stage; CAPRIN2 functions as a scaffold for the complex by binding to CCNY via its N terminus and to CDK14 via its C terminus. Interacts with CCNY; CCNY mediates its recruitment to the plasma membrane and promotes phosphorylation of LRP6. Interacts with CCDN3 and CDKN1A. Interacts with SEPT8. Interacts with 14-3-3 proteina YWHAB, YWHAE, YWHAH and YWHAQ. In the adult, widely expressed at low levels except in brain, kidney and testis where expression is high. In the brain, detected in cortex, hippocampus, dentate gyrus, amygdala cortex, parasubiculum and cerebellum. In the embryo, expressed predominantly in the nervous system.

Its subcellular location is the cell membrane. The protein resides in the cytoplasm. It localises to the nucleus. The catalysed reaction is L-seryl-[protein] + ATP = O-phospho-L-seryl-[protein] + ADP + H(+). It carries out the reaction L-threonyl-[protein] + ATP = O-phospho-L-threonyl-[protein] + ADP + H(+). Serine/threonine-protein kinase activity is promoted by associated cyclins CCDN3 and CCNY and repressed by CDKN1A. Functionally, serine/threonine-protein kinase involved in the control of the eukaryotic cell cycle, whose activity is controlled by an associated cyclin. Acts as a cell-cycle regulator of Wnt signaling pathway during G2/M phase by mediating the phosphorylation of LRP6 at 'Ser-1490', leading to the activation of the Wnt signaling pathway. Acts as a regulator of cell cycle progression and cell proliferation via its interaction with CCDN3. Phosphorylates RB1 in vitro, however the relevance of such result remains to be confirmed in vivo. May also play a role in meiosis, neuron differentiation and may indirectly act as a negative regulator of insulin-responsive glucose transport. This is Cyclin-dependent kinase 14 (Cdk14) from Mus musculus (Mouse).